The sequence spans 386 residues: Succinate--CoA ligase [ADP-forming] subunit beta (386 aa).

The ATP-grasp domain maps to 9–244 (KELLKQFGVT…LDEEDPAEIE (236 aa)). ATP-binding positions include Lys-46, 53–55 (GRG), Glu-99, Ala-102, and Glu-107. 2 residues coordinate Mg(2+): Asn-199 and Asp-213. Substrate is bound by residues Asn-264 and 321 to 323 (GIM).

The protein belongs to the succinate/malate CoA ligase beta subunit family. As to quaternary structure, heterotetramer of two alpha and two beta subunits. The cofactor is Mg(2+).

The enzyme catalyses succinate + ATP + CoA = succinyl-CoA + ADP + phosphate. It carries out the reaction GTP + succinate + CoA = succinyl-CoA + GDP + phosphate. The protein operates within carbohydrate metabolism; tricarboxylic acid cycle; succinate from succinyl-CoA (ligase route): step 1/1. Its function is as follows. Succinyl-CoA synthetase functions in the citric acid cycle (TCA), coupling the hydrolysis of succinyl-CoA to the synthesis of either ATP or GTP and thus represents the only step of substrate-level phosphorylation in the TCA. The beta subunit provides nucleotide specificity of the enzyme and binds the substrate succinate, while the binding sites for coenzyme A and phosphate are found in the alpha subunit. This chain is Succinate--CoA ligase [ADP-forming] subunit beta, found in Bordetella pertussis (strain Tohama I / ATCC BAA-589 / NCTC 13251).